A 159-amino-acid chain; its full sequence is Deoxyuridine 5'-triphosphate nucleotidohydrolase (159 aa).

DUMP is bound by residues serine 79, glycine 92, aspartate 95, tyrosine 98, lysine 103, arginine 148, phenylalanine 153, and glycine 154.

Belongs to the dUTPase family. Homotrimer. Requires Mg(2+) as cofactor.

It carries out the reaction dUTP + H2O = dUMP + diphosphate + H(+). Its pathway is pyrimidine metabolism; dUMP biosynthesis; dUMP from dCTP (dUTP route): step 2/2. Involved in nucleotide metabolism via production of dUMP, the immediate precursor of thymidine nucleotides, and decreases the intracellular concentration of dUTP so that uracil cannot be incorporated into DNA. In Candida albicans (strain SC5314 / ATCC MYA-2876) (Yeast), this protein is Deoxyuridine 5'-triphosphate nucleotidohydrolase (DUT1).